The sequence spans 539 residues: Carotene epsilon-monooxygenase, chloroplastic (539 aa).

The N-terminal 36 residues, Met-1–Arg-36, are a transit peptide targeting the chloroplast. Cys-487 lines the heme pocket.

This sequence belongs to the cytochrome P450 family. It depends on heme as a cofactor.

The protein localises to the plastid. It localises to the chloroplast. The enzyme catalyses alpha-carotene + reduced [NADPH--hemoprotein reductase] + O2 = alpha-cryptoxanthin + oxidized [NADPH--hemoprotein reductase] + H2O + H(+). It carries out the reaction zeinoxanthin + reduced [NADPH--hemoprotein reductase] + O2 = lutein + oxidized [NADPH--hemoprotein reductase] + H2O + H(+). Heme-containing cytochrome P450 involved in the biosynthesis of xanthophylls. Specific for epsilon- and beta-ring hydroxylation of alpha-carotene. Has only a low activity toward the beta-rings of beta-carotene. The preferred substrate in planta is not alpha-carotene but the epsilon-ring of zeinoxanthin. Possesses a major beta-carotene hydroxylase activity in planta when depleted in its preferred substrate alpha-carotene. The protein is Carotene epsilon-monooxygenase, chloroplastic (CYP97C1) of Arabidopsis thaliana (Mouse-ear cress).